The following is a 488-amino-acid chain: Protein nucleotidyltransferase YdiU (488 aa).

Residues glycine 91, glycine 93, arginine 94, lysine 114, aspartate 126, glycine 127, arginine 177, and arginine 184 each contribute to the ATP site. The segment at arginine 108–glycine 127 is disordered. Aspartate 253 acts as the Proton acceptor in catalysis. Mg(2+) is bound by residues asparagine 254 and aspartate 263. Position 263 (aspartate 263) interacts with ATP.

This sequence belongs to the SELO family. Mg(2+) is required as a cofactor. The cofactor is Mn(2+).

The enzyme catalyses L-seryl-[protein] + ATP = 3-O-(5'-adenylyl)-L-seryl-[protein] + diphosphate. It carries out the reaction L-threonyl-[protein] + ATP = 3-O-(5'-adenylyl)-L-threonyl-[protein] + diphosphate. It catalyses the reaction L-tyrosyl-[protein] + ATP = O-(5'-adenylyl)-L-tyrosyl-[protein] + diphosphate. The catalysed reaction is L-histidyl-[protein] + UTP = N(tele)-(5'-uridylyl)-L-histidyl-[protein] + diphosphate. The enzyme catalyses L-seryl-[protein] + UTP = O-(5'-uridylyl)-L-seryl-[protein] + diphosphate. It carries out the reaction L-tyrosyl-[protein] + UTP = O-(5'-uridylyl)-L-tyrosyl-[protein] + diphosphate. Its function is as follows. Nucleotidyltransferase involved in the post-translational modification of proteins. It can catalyze the addition of adenosine monophosphate (AMP) or uridine monophosphate (UMP) to a protein, resulting in modifications known as AMPylation and UMPylation. The polypeptide is Protein nucleotidyltransferase YdiU (Bacillus anthracis (strain A0248)).